Reading from the N-terminus, the 104-residue chain is Small ribosomal subunit protein bS16 (104 aa).

This sequence belongs to the bacterial ribosomal protein bS16 family.

The chain is Small ribosomal subunit protein bS16 from Gemmatimonas aurantiaca (strain DSM 14586 / JCM 11422 / NBRC 100505 / T-27).